A 445-amino-acid polypeptide reads, in one-letter code: MIMMTRFAPSPTGYLHVGNVRTALICWLYTRSKQGRFLLRFDDTDLQRSKDDYRNEIANDLKWLQMDWDFDVRQSSRFDRYDEIFNYLLKEELIYPCYESKEELDFKRKMQLKLGLPPIYDRSALKLTQDEKNKYSEQDVYFRFKIDQSQLISWDDEIRGKVSFNAANISDPIVKRADGTYTYMLPSVIDDIDFDITHIVRGEDHISNTAIQIQMFNALRASVPTFSHLSLLYCDDNKISKRVGGFSIKDMQFYELEPMAINSYFAKIGTSDPIVVHTKIQDLIYNFDITKFNQAPTQFNIDDVIKLNPKVLHKMSFSDVKHRLSELNITSPDLWDFVSGNVQKFSDIQEWIKICGQSTVPVINESDQDFIKMALSVFPNGEINQDTWKTWVANIKEKTDRKSKDIFIPLRLALTGISTGPELAKLLPILGRAEIIRRLGYSSRC.

A 'HIGH' region motif is present at residues 9-19 (PSPTGYLHVGN). The 'KMSKS' region motif lies at 238 to 242 (KISKR). Lysine 241 is a binding site for ATP.

It belongs to the class-I aminoacyl-tRNA synthetase family. Glutamate--tRNA ligase type 1 subfamily. In terms of assembly, monomer.

It is found in the cytoplasm. It carries out the reaction tRNA(Glu) + L-glutamate + ATP = L-glutamyl-tRNA(Glu) + AMP + diphosphate. In terms of biological role, catalyzes the attachment of glutamate to tRNA(Glu) in a two-step reaction: glutamate is first activated by ATP to form Glu-AMP and then transferred to the acceptor end of tRNA(Glu). This chain is Glutamate--tRNA ligase 1, found in Ehrlichia ruminantium (strain Gardel).